The following is a 203-amino-acid chain: dITP/XTP pyrophosphatase (203 aa).

Residue 15 to 20 participates in substrate binding; it reads SGNAGK. Residues Glu45 and Asp74 each contribute to the Mg(2+) site. Asp74 acts as the Proton acceptor in catalysis. Residues Ser75, 153–156, Lys176, and 181–182 each bind substrate; these read FGYD and HR.

Belongs to the HAM1 NTPase family. Homodimer. The cofactor is Mg(2+).

It catalyses the reaction XTP + H2O = XMP + diphosphate + H(+). It carries out the reaction dITP + H2O = dIMP + diphosphate + H(+). The catalysed reaction is ITP + H2O = IMP + diphosphate + H(+). In terms of biological role, pyrophosphatase that catalyzes the hydrolysis of nucleoside triphosphates to their monophosphate derivatives, with a high preference for the non-canonical purine nucleotides XTP (xanthosine triphosphate), dITP (deoxyinosine triphosphate) and ITP. Seems to function as a house-cleaning enzyme that removes non-canonical purine nucleotides from the nucleotide pool, thus preventing their incorporation into DNA/RNA and avoiding chromosomal lesions. The sequence is that of dITP/XTP pyrophosphatase from Prochlorococcus marinus (strain MIT 9313).